The sequence spans 1291 residues: Cytoplasmic FMR1-interacting protein (1291 aa).

Positions 1269 to 1291 are disordered; it reads HPSVISSSSHYQDPQKLRQSMNN. Over residues 1271-1291 the composition is skewed to polar residues; it reads SVISSSSHYQDPQKLRQSMNN.

This sequence belongs to the CYFIP family. As to quaternary structure, interacts with Fmr1 and Rac1. Component of the WAVE complex composed of Hem/Kette, Scar/Wave and Cyfip where it binds through its C-terminus directly to Hem.

It localises to the cytoplasm. Its function is as follows. Plays a role in guidance and morphology of central and peripheral axons and in synaptic morphology. Also required for formation of cell membrane protrusions and for bristle development. The polypeptide is Cytoplasmic FMR1-interacting protein (Drosophila pseudoobscura pseudoobscura (Fruit fly)).